The sequence spans 198 residues: Holliday junction resolvase RecU (198 aa).

A disordered region spans residues 1-21 (MVNYPHKLSSQKRQPSLSQPK). Residues 11 to 21 (QKRQPSLSQPK) show a composition bias toward polar residues. Thr-81, Asp-83, Glu-96, and Gln-115 together coordinate Mg(2+).

Belongs to the RecU family. Requires Mg(2+) as cofactor.

It is found in the cytoplasm. The enzyme catalyses Endonucleolytic cleavage at a junction such as a reciprocal single-stranded crossover between two homologous DNA duplexes (Holliday junction).. Functionally, endonuclease that resolves Holliday junction intermediates in genetic recombination. Cleaves mobile four-strand junctions by introducing symmetrical nicks in paired strands. Promotes annealing of linear ssDNA with homologous dsDNA. Required for DNA repair, homologous recombination and chromosome segregation. This is Holliday junction resolvase RecU from Streptococcus pneumoniae (strain ATCC 700669 / Spain 23F-1).